The sequence spans 250 residues: Cell division protein ZapD (250 aa).

It belongs to the ZapD family. In terms of assembly, interacts with FtsZ.

It is found in the cytoplasm. Functionally, cell division factor that enhances FtsZ-ring assembly. Directly interacts with FtsZ and promotes bundling of FtsZ protofilaments, with a reduction in FtsZ GTPase activity. The sequence is that of Cell division protein ZapD from Serratia proteamaculans (strain 568).